The chain runs to 473 residues: ATP synthase subunit beta (473 aa).

Gly153–Thr160 contributes to the ATP binding site.

Belongs to the ATPase alpha/beta chains family. In terms of assembly, F-type ATPases have 2 components, CF(1) - the catalytic core - and CF(0) - the membrane proton channel. CF(1) has five subunits: alpha(3), beta(3), gamma(1), delta(1), epsilon(1). CF(0) has three main subunits: a(1), b(2) and c(9-12). The alpha and beta chains form an alternating ring which encloses part of the gamma chain. CF(1) is attached to CF(0) by a central stalk formed by the gamma and epsilon chains, while a peripheral stalk is formed by the delta and b chains.

Its subcellular location is the cell inner membrane. It catalyses the reaction ATP + H2O + 4 H(+)(in) = ADP + phosphate + 5 H(+)(out). Produces ATP from ADP in the presence of a proton gradient across the membrane. The catalytic sites are hosted primarily by the beta subunits. The sequence is that of ATP synthase subunit beta from Rickettsia conorii (strain ATCC VR-613 / Malish 7).